Reading from the N-terminus, the 66-residue chain is ATP synthase protein 8 (66 aa).

The helical transmembrane segment at 8 to 24 threads the bilayer; it reads PWPMVIMSMILTLFYIT. Lysine 54 bears the N6-acetyllysine; alternate mark. Residue lysine 54 is modified to N6-succinyllysine; alternate. Lysine 57 bears the N6-acetyllysine mark.

The protein belongs to the ATPase protein 8 family. In terms of assembly, F-type ATPases have 2 components, CF(1) - the catalytic core - and CF(0) - the membrane proton channel. Component of an ATP synthase complex composed of ATP5PB, ATP5MC1, ATP5F1E, ATP5PD, ATP5ME, ATP5PF, ATP5MF, MT-ATP6, MT-ATP8, ATP5F1A, ATP5F1B, ATP5F1D, ATP5F1C, ATP5PO, ATP5MG, ATP5MK and ATP5MJ. Interacts with PRICKLE3.

It is found in the mitochondrion membrane. Its function is as follows. Mitochondrial membrane ATP synthase (F(1)F(0) ATP synthase or Complex V) produces ATP from ADP in the presence of a proton gradient across the membrane which is generated by electron transport complexes of the respiratory chain. F-type ATPases consist of two structural domains, F(1) - containing the extramembraneous catalytic core and F(0) - containing the membrane proton channel, linked together by a central stalk and a peripheral stalk. During catalysis, ATP synthesis in the catalytic domain of F(1) is coupled via a rotary mechanism of the central stalk subunits to proton translocation. Part of the complex F(0) domain. Minor subunit located with subunit a in the membrane. This chain is ATP synthase protein 8 (MT-ATP8), found in Alouatta sara (Bolivian red howler monkey).